We begin with the raw amino-acid sequence, 417 residues long: PRKCA-binding protein (417 aa).

In terms of domain architecture, PDZ spans K22–Q105. Zn(2+) contacts are provided by C44 and C46. T82 bears the Phosphothreonine mark. The AH domain occupies L144–V357. A disordered region spans residues Q375–S417. Positions E377–A393 are enriched in acidic residues. The S-palmitoyl cysteine; by DHHC8 moiety is linked to residue C415.

Monomer and homodimer. Interacts with CXADR. Interacts presynaptically with the glutamate receptors GRIA2, GRIA3, GRIK3, isoform 3 of GRIA4, isoform A of GRM4, GRM7 and GRM8; with NAPA and NAPB; and with BTG2. The interaction with NAPA and NAPB disrupts the interaction with GRIA2, conducting to the internalization of GRIA2. Interacts with PRKCA; with the amine transporters SLC6A2 and SLC6A3; with the channels ASIC1 and ASIC2; with the GTP-binding proteins ARF1 and ARF3; with the ephrin receptor tyrosine kinases EPHA7, EPHB1 and EPHB2; with ERBB2 and through its PDZ domain with the C-terminal tail of PRLHR. Interacts with UNC5A. Interacts (via AH domain) with NCS1/FREQ; in a calcium-dependent manner. Interacts with F-actin and associates with the ARP2/3 complex. Interacts (via PDZ domain) with ARF1 (activated); the interaction blocks Arp2/3 complex inhibition. Interacts with SORCS3. In terms of processing, phosphorylation at Thr-82 appears to inhibit the interaction with AMPA receptors. Post-translationally, palmitoylation on Cys-415 is essential for long-term synaptic depression (LTD).

Its subcellular location is the cytoplasm. The protein resides in the perinuclear region. The protein localises to the membrane. It is found in the postsynaptic density. It localises to the synapse. Its subcellular location is the synaptosome. The protein resides in the cytoskeleton. In terms of biological role, probable adapter protein that bind to and organize the subcellular localization of a variety of membrane proteins containing some PDZ recognition sequence. Involved in the clustering of various receptors, possibly by acting at the receptor internalization level. Plays a role in synaptic plasticity by regulating the trafficking and internalization of AMPA receptors. May be regulated upon PRKCA activation. May regulate ASIC1/ASIC3 channel. Regulates actin polymerization by inhibiting the actin-nucleating activity of the Arp2/3 complex; the function is competitive with nucleation promoting factors and is linked to neuronal morphology regulation and AMPA receptor (AMPAR) endocytosis. Via interaction with the Arp2/3 complex involved in regulation of synaptic plasicity of excitatory synapses and required for spine shrinkage during long-term depression (LTD). Involved in regulation of astrocyte morphology, antagonistic to Arp2/3 complex activator WASL/N-WASP function. This chain is PRKCA-binding protein (PICK1), found in Bos taurus (Bovine).